Consider the following 512-residue polypeptide: ATP synthase subunit alpha (512 aa).

169-176 (GDRQTGKT) lines the ATP pocket.

This sequence belongs to the ATPase alpha/beta chains family. F-type ATPases have 2 components, CF(1) - the catalytic core - and CF(0) - the membrane proton channel. CF(1) has five subunits: alpha(3), beta(3), gamma(1), delta(1), epsilon(1). CF(0) has three main subunits: a(1), b(2) and c(9-12). The alpha and beta chains form an alternating ring which encloses part of the gamma chain. CF(1) is attached to CF(0) by a central stalk formed by the gamma and epsilon chains, while a peripheral stalk is formed by the delta and b chains.

The protein localises to the cell membrane. The enzyme catalyses ATP + H2O + 4 H(+)(in) = ADP + phosphate + 5 H(+)(out). In terms of biological role, produces ATP from ADP in the presence of a proton gradient across the membrane. The alpha chain is a regulatory subunit. In Buchnera aphidicola subsp. Acyrthosiphon pisum (strain Tuc7), this protein is ATP synthase subunit alpha.